A 271-amino-acid polypeptide reads, in one-letter code: Pyrroline-5-carboxylate reductase (271 aa).

It belongs to the pyrroline-5-carboxylate reductase family.

It is found in the cytoplasm. It catalyses the reaction L-proline + NADP(+) = (S)-1-pyrroline-5-carboxylate + NADPH + 2 H(+). It carries out the reaction L-proline + NAD(+) = (S)-1-pyrroline-5-carboxylate + NADH + 2 H(+). It participates in amino-acid biosynthesis; L-proline biosynthesis; L-proline from L-glutamate 5-semialdehyde: step 1/1. Functionally, catalyzes the reduction of 1-pyrroline-5-carboxylate (PCA) to L-proline. In Haemophilus influenzae (strain ATCC 51907 / DSM 11121 / KW20 / Rd), this protein is Pyrroline-5-carboxylate reductase.